Consider the following 227-residue polypeptide: Ribonuclease 3 (227 aa).

The region spanning 4–133 (FEKLETLLGY…LIAAIYLDSN (130 aa)) is the RNase III domain. Glu-46 lines the Mg(2+) pocket. Asp-50 is an active-site residue. Mg(2+) contacts are provided by Asn-119 and Glu-122. Glu-122 is an active-site residue. The DRBM domain occupies 158–226 (DPKTALQEWA…ARCLLHRLKN (69 aa)).

This sequence belongs to the ribonuclease III family. In terms of assembly, homodimer. It depends on Mg(2+) as a cofactor.

It localises to the cytoplasm. It carries out the reaction Endonucleolytic cleavage to 5'-phosphomonoester.. In terms of biological role, digests double-stranded RNA. Involved in the processing of primary rRNA transcript to yield the immediate precursors to the large and small rRNAs (23S and 16S). Processes some mRNAs, and tRNAs when they are encoded in the rRNA operon. Processes pre-crRNA and tracrRNA of type II CRISPR loci if present in the organism. This chain is Ribonuclease 3, found in Rickettsia typhi (strain ATCC VR-144 / Wilmington).